Here is a 58-residue protein sequence, read N- to C-terminus: Sperm protamine P1 (58 aa).

The tract at residues 1–58 (MARYRRRSRSRSRSRYGRRRRRSRSRRRRSRRRRRRRGRRGRGYHRRSPHRRRRRRRR) is disordered.

This sequence belongs to the protamine P1 family. Testis.

The protein localises to the nucleus. It localises to the chromosome. Functionally, protamines substitute for histones in the chromatin of sperm during the haploid phase of spermatogenesis. They compact sperm DNA into a highly condensed, stable and inactive complex. In Monodelphis domestica (Gray short-tailed opossum), this protein is Sperm protamine P1 (PRM1).